The chain runs to 213 residues: Large ribosomal subunit protein eL14 (213 aa).

Residue K79 is modified to N6-acetyllysine. An N6-acetyllysine; alternate modification is found at K85. K85 is subject to N6-succinyllysine; alternate. K124 participates in a covalent cross-link: Glycyl lysine isopeptide (Lys-Gly) (interchain with G-Cter in SUMO2). S139 is modified (phosphoserine). The segment at 166–213 is disordered; that stretch reads TAGKKAPAQKAPAQKAAGQKAAPPPKAQKVQKPPAQKAPAPKASGEKA. A 1-1; approximate repeat occupies 169–173; that stretch reads KKAPA. The tract at residues 169–188 is 4 X 5 AA tandem repeats of Q-K-A-[APS]-X; sequence KKAPAQKAPAQKAAGQKAAP. Tandem repeats lie at residues 174–178, 179–183, 184–188, 191–193, and 194–196. Residues 191–196 form a 2 X 3 AA tandem repeats of K-G-Q region; that stretch reads KAQKVQ. K202 carries the N6-succinyllysine modification.

Belongs to the eukaryotic ribosomal protein eL14 family. As to quaternary structure, component of the large ribosomal subunit.

It localises to the cytoplasm. Functionally, component of the large ribosomal subunit. The ribosome is a large ribonucleoprotein complex responsible for the synthesis of proteins in the cell. The sequence is that of Large ribosomal subunit protein eL14 (RPL14) from Sus scrofa (Pig).